The sequence spans 154 residues: UPF0225 protein YE2246 (154 aa).

It belongs to the UPF0225 family.

The polypeptide is UPF0225 protein YE2246 (Yersinia enterocolitica serotype O:8 / biotype 1B (strain NCTC 13174 / 8081)).